The chain runs to 471 residues: Exoglucanase 2 (471 aa).

The signal sequence occupies residues 1-18; sequence MIVGILTTLATLATLAAS. Positions 19–24 are excised as a propeptide; the sequence is VPLEER. Gln-25 is modified (pyrrolidone carboxylic acid). A CBM1 domain is found at 26–62; the sequence is ACSSVWGQCGGQNWSGPTCCASGSTCVYSNDYYSQCL. The segment covering 64 to 101 has biased composition (low complexity); it reads GAASSSSSTRAASTTSRVSPTTSRSSSATPPPGSTTTR. The interval 64-108 is disordered; it reads GAASSSSSTRAASTTSRVSPTTSRSSSATPPPGSTTTRVPPVGSG. The linker stretch occupies residues 66–106; it reads ASSSSSTRAASTTSRVSPTTSRSSSATPPPGSTTTRVPPVG. The segment at 107–471 is catalytic; that stretch reads SGTATYSGNP…LLTNANPSFL (365 aa). O-linked (Man...) threonine glycans are attached at residues Thr-111 and Thr-121. O-linked (Man...) serine glycosylation is found at Ser-130, Ser-133, Ser-134, and Ser-139. An O-linked (Man...) threonine glycan is attached at Thr-146. An intrachain disulfide couples Cys-200 to Cys-259. The active-site Proton donor is the Asp-245. A glycan (N-linked (GlcNAc) asparagine) is linked at Asn-313. Asn-334 carries an N-linked (GlcNAc...) (high mannose) asparagine glycan. The cysteines at positions 392 and 439 are disulfide-linked.

The protein belongs to the glycosyl hydrolase 6 (cellulase B) family. In terms of processing, asn-334 contains mainly a high-mannose-type glycan (Hex(7-9)GlcNAc(2)) in a 3:1 ration with a single GlcNAc. Asn-313 was primarily unglycosylated with a small fraction (18%) bearing a single GlcNAc at this site.

The protein resides in the secreted. It carries out the reaction Hydrolysis of (1-&gt;4)-beta-D-glucosidic linkages in cellulose and cellotetraose, releasing cellobiose from the non-reducing ends of the chains.. Its function is as follows. Exocellobiohydrolases (CBH) that catalyzes the hydrolysis of 1,4-beta-D-glucosidic bonds in cellulose to release the disaccharide cellobiose. The degradation of cellulose involves an interplay between different cellulolytic enzymes. Hydrolysis starts with endoglucanases (EGs), which cut internal beta-1,4-glucosidic bonds in cellulose to reduce the polymerization degree of the substrate and create new chain ends for exocellobiohydrolases (CBHs). The CBHs release the disaccharide cellobiose from the non-reducing end of the cellulose polymer chain. Finally, beta-1,4-glucosidases hydrolyze the cellobiose and other short cello-oligosaccharides into glucose units. The sequence is that of Exoglucanase 2 (cbh2) from Hypocrea jecorina (Trichoderma reesei).